Here is a 429-residue protein sequence, read N- to C-terminus: 3-oxo-tetronate kinase (429 aa).

ATP contacts are provided by residues Ser268, 366-369, and Gly410; that span reads GGET.

This sequence belongs to the four-carbon acid sugar kinase family.

The catalysed reaction is 3-dehydro-L-erythronate + ATP = 3-dehydro-4-O-phospho-L-erythronate + ADP + H(+). It catalyses the reaction 3-dehydro-D-erythronate + ATP = 3-dehydro-4-O-phospho-D-erythronate + ADP + H(+). Catalyzes the ATP-dependent phosphorylation of 3-oxo-tetronate to 3-oxo-tetronate 4-phosphate. This is 3-oxo-tetronate kinase from Pseudomonas savastanoi pv. phaseolicola (strain 1448A / Race 6) (Pseudomonas syringae pv. phaseolicola (strain 1448A / Race 6)).